Consider the following 561-residue polypeptide: DNA ligase B (561 aa).

The active-site N6-AMP-lysine intermediate is K125.

The protein belongs to the NAD-dependent DNA ligase family. LigB subfamily.

It carries out the reaction NAD(+) + (deoxyribonucleotide)n-3'-hydroxyl + 5'-phospho-(deoxyribonucleotide)m = (deoxyribonucleotide)n+m + AMP + beta-nicotinamide D-nucleotide.. Catalyzes the formation of phosphodiester linkages between 5'-phosphoryl and 3'-hydroxyl groups in double-stranded DNA using NAD as a coenzyme and as the energy source for the reaction. This is DNA ligase B from Salmonella paratyphi B (strain ATCC BAA-1250 / SPB7).